Here is a 259-residue protein sequence, read N- to C-terminus: Bisphosphoglycerate mutase (259 aa).

Residue serine 2 is modified to N-acetylserine. Substrate-binding positions include 10 to 17, 23 to 24, arginine 62, 89 to 92, arginine 100, and 116 to 117; these read RHGEGQWN, CS, ERHY, and RR. The active-site Tele-phosphohistidine intermediate is the histidine 11. Glutamate 89 acts as the Proton donor/acceptor in catalysis. Threonine 122 carries the phosphothreonine modification. 189–190 contacts substrate; the sequence is GN.

It belongs to the phosphoglycerate mutase family. BPG-dependent PGAM subfamily. Homodimer. As to expression, expressed in red blood cells. Expressed in placenta (labyrinthine trophoblasts).

It carries out the reaction (2R)-3-phospho-glyceroyl phosphate = (2R)-2,3-bisphosphoglycerate + H(+). The catalysed reaction is (2R)-2-phosphoglycerate = (2R)-3-phosphoglycerate. Its activity is regulated as follows. At alkaline pH BPGM favors the synthase reaction; however, at lower pH the phosphatase reaction is dominant. Inhibited by citrate. Functionally, plays a major role in regulating hemoglobin oxygen affinity by controlling the levels of its allosteric effector 2,3-bisphosphoglycerate (2,3-BPG). Also exhibits mutase (EC 5.4.2.11) activity. The protein is Bisphosphoglycerate mutase (Bpgm) of Mus musculus (Mouse).